Here is a 250-residue protein sequence, read N- to C-terminus: 2,3-bisphosphoglycerate-dependent phosphoglycerate mutase (250 aa).

Residues 8 to 15, 21 to 22, Arg60, 87 to 90, Lys98, 114 to 115, and 183 to 184 contribute to the substrate site; these read RHGESEWN, TG, ERHY, RR, and GN. Catalysis depends on His9, which acts as the Tele-phosphohistidine intermediate. The active-site Proton donor/acceptor is Glu87.

It belongs to the phosphoglycerate mutase family. BPG-dependent PGAM subfamily.

The enzyme catalyses (2R)-2-phosphoglycerate = (2R)-3-phosphoglycerate. It functions in the pathway carbohydrate degradation; glycolysis; pyruvate from D-glyceraldehyde 3-phosphate: step 3/5. Catalyzes the interconversion of 2-phosphoglycerate and 3-phosphoglycerate. This chain is 2,3-bisphosphoglycerate-dependent phosphoglycerate mutase, found in Borrelia duttonii (strain Ly).